Consider the following 647-residue polypeptide: Glutamyl-tRNA(Gln) amidotransferase subunit B, mitochondrial (647 aa).

A mitochondrion-targeting transit peptide spans 1 to 16; it reads MARNLCRNVQTTPRPL. A disordered region spans residues 39-77; it reads PRPRYFGSSTAKSAKKKSNNKAYSGSSMSAGDASAGPSR. Low complexity predominate over residues 58–76; the sequence is NKAYSGSSMSAGDASAGPS.

Belongs to the GatB/GatE family. GatB subfamily. As to quaternary structure, subunit of the heterotrimeric GatCAB amidotransferase (AdT) complex, composed of A, B and C subunits.

It is found in the mitochondrion. It catalyses the reaction L-glutamyl-tRNA(Gln) + L-glutamine + ATP + H2O = L-glutaminyl-tRNA(Gln) + L-glutamate + ADP + phosphate + H(+). In terms of biological role, allows the formation of correctly charged Gln-tRNA(Gln) through the transamidation of misacylated Glu-tRNA(Gln) in the mitochondria. The reaction takes place in the presence of glutamine and ATP through an activated gamma-phospho-Glu-tRNA(Gln). The protein is Glutamyl-tRNA(Gln) amidotransferase subunit B, mitochondrial of Mycosarcoma maydis (Corn smut fungus).